We begin with the raw amino-acid sequence, 429 residues long: MSTTVRVVLDPPSNGEFYTLEDVIAGSVVLGLEKSVNIREVMVKLVGQSEAVVRPGDHLENEKPQSLQVPLSDNRSLHEVVKLESSVFPPENVKAAMKGSRKPFKVEKGEYKFPFEFHFPSRPQCIQRHQRKLFTYLKGRTNPKLPPSFNNLLSSKDVLNLNAYFYSLGCIEYFVEATVFTGGDEMWFKPFRSYPALKRTFEFIPSNVAQEHLEDALRENPNTPPQVFRSKFDVTFEGSEQQMWVEVRSKHLRSVYRLDYLFRPSGKKFNQVFLCMLNPLPESADLRVARVELNLIEVVTYLAGNRSNANLSSLRLAGVDTDYKVDLTKCQQTESGFTECHVELSDIYPLDMIRFNEEDYKHNGNRLYSFDSCNIRRRFKFQLFLHWTLNGVDHFQTEVLTNFTNIFCESVTVAEQPPDYMEEQLPKYE.

It belongs to the ART10 family.

Its subcellular location is the cytoplasm. May regulate endocytosis by recruiting RSP5 ubiquitin ligase activity to specific plasma membrane proteins in response to extracellular stimuli. The sequence is that of Arrestin-related trafficking adapter 10 (ART10) from Lachancea thermotolerans (strain ATCC 56472 / CBS 6340 / NRRL Y-8284) (Yeast).